The following is a 435-amino-acid chain: Methylenetetrahydrofolate--tRNA-(uracil-5-)-methyltransferase TrmFO (435 aa).

Position 7 to 12 (7 to 12) interacts with FAD; it reads GAGLAG.

Belongs to the MnmG family. TrmFO subfamily. It depends on FAD as a cofactor.

The protein resides in the cytoplasm. It catalyses the reaction uridine(54) in tRNA + (6R)-5,10-methylene-5,6,7,8-tetrahydrofolate + NADH + H(+) = 5-methyluridine(54) in tRNA + (6S)-5,6,7,8-tetrahydrofolate + NAD(+). It carries out the reaction uridine(54) in tRNA + (6R)-5,10-methylene-5,6,7,8-tetrahydrofolate + NADPH + H(+) = 5-methyluridine(54) in tRNA + (6S)-5,6,7,8-tetrahydrofolate + NADP(+). Catalyzes the folate-dependent formation of 5-methyl-uridine at position 54 (M-5-U54) in all tRNAs. This is Methylenetetrahydrofolate--tRNA-(uracil-5-)-methyltransferase TrmFO from Thermotoga maritima (strain ATCC 43589 / DSM 3109 / JCM 10099 / NBRC 100826 / MSB8).